A 205-amino-acid polypeptide reads, in one-letter code: Guanylyl cyclase-activating protein 1 (205 aa).

A lipid anchor (N-myristoyl glycine) is attached at Gly2. Asn3 is modified (deamidated asparagine). EF-hand domains are found at residues 14-49, 51-86, 87-122, and 131-166; these read SSTE…KNLS, WASQ…VLKG, KVEQ…IRAI, and TAEE…DQML. The Ca(2+) site is built by Asp64, Asn66, Asp68, Tyr70, Glu75, Asp100, Asp102, Asn104, Cys106, Glu111, Asp144, Asn146, Asp148, Glu150, and Glu155. Positions 185-205 are disordered; the sequence is NGEQDEEGASGRETEAAEADG.

Homodimer. Detected in the retina. Detected in rod and cone photoreceptor cells (at protein level). Also present in certain pinealocytes.

Its subcellular location is the membrane. It localises to the photoreceptor inner segment. The protein resides in the cell projection. It is found in the cilium. The protein localises to the photoreceptor outer segment. In terms of biological role, stimulates retinal guanylyl cyclase when free calcium ions concentration is low and inhibits guanylyl cyclase when free calcium ions concentration is elevated. This Ca(2+)-sensitive regulation of retinal guanylyl cyclase is a key event in recovery of the dark state of rod photoreceptors following light exposure. May be involved in cone photoreceptor light response and recovery of response in bright light. The protein is Guanylyl cyclase-activating protein 1 (GUCA1A) of Bos taurus (Bovine).